A 202-amino-acid polypeptide reads, in one-letter code: Large ribosomal subunit protein bL25 (202 aa).

It belongs to the bacterial ribosomal protein bL25 family. CTC subfamily. Part of the 50S ribosomal subunit; part of the 5S rRNA/L5/L18/L25 subcomplex. Contacts the 5S rRNA. Binds to the 5S rRNA independently of L5 and L18.

Functionally, this is one of the proteins that binds to the 5S RNA in the ribosome where it forms part of the central protuberance. The sequence is that of Large ribosomal subunit protein bL25 from Corynebacterium efficiens (strain DSM 44549 / YS-314 / AJ 12310 / JCM 11189 / NBRC 100395).